The chain runs to 229 residues: Ras-related protein rab-39 (229 aa).

73 to 77 (DTAGQ) contacts GTP. 2 S-geranylgeranyl cysteine lipidation sites follow: C227 and C229. C229 bears the Cysteine methyl ester mark.

It belongs to the small GTPase superfamily. Rab family. Interacts (in GTP-bound form) with Ras association domain-containing protein rsf-1.

It is found in the cell membrane. The protein localises to the cytoplasmic vesicle membrane. The protein resides in the golgi apparatus. Small GTPases Rab involved in autophagy. The small GTPases Rab are key regulators of intracellular membrane trafficking, from the formation of transport vesicles to their fusion with membranes. Rabs cycle between an inactive GDP-bound form and an active GTP-bound form that is able to recruit to membranes different sets of downstream effectors directly responsible for vesicle formation, movement, tethering and fusion. Involved in positively regulating the oxidative stress response, perhaps in concert with the Ras association domain-containing protein rsf-1. The polypeptide is Ras-related protein rab-39 (Caenorhabditis elegans).